A 303-amino-acid chain; its full sequence is Zinc import ATP-binding protein ZnuC (303 aa).

The ABC transporter domain maps to 17–232 (VSLENVGVLR…PEYVRLFGSR (216 aa)). Position 49–56 (49–56 (GPNGSGKS)) interacts with ATP. A disordered region spans residues 263–303 (DHCHPDDGHHAHEHGHAGHEHDHDHPDHAHPHAHEAGERHA).

It belongs to the ABC transporter superfamily. Zinc importer (TC 3.A.1.15.5) family. As to quaternary structure, the complex is composed of two ATP-binding proteins (ZnuC), two transmembrane proteins (ZnuB) and a solute-binding protein (ZnuA).

It localises to the cell inner membrane. The enzyme catalyses Zn(2+)(out) + ATP(in) + H2O(in) = Zn(2+)(in) + ADP(in) + phosphate(in) + H(+)(in). Functionally, part of the ABC transporter complex ZnuABC involved in zinc import. Responsible for energy coupling to the transport system. This chain is Zinc import ATP-binding protein ZnuC, found in Rhizobium johnstonii (strain DSM 114642 / LMG 32736 / 3841) (Rhizobium leguminosarum bv. viciae).